Consider the following 114-residue polypeptide: UPF0342 protein SERP1381 (114 aa).

Belongs to the UPF0342 family.

This chain is UPF0342 protein SERP1381, found in Staphylococcus epidermidis (strain ATCC 35984 / DSM 28319 / BCRC 17069 / CCUG 31568 / BM 3577 / RP62A).